The primary structure comprises 1522 residues: Lysine-specific demethylase 5B (1522 aa).

The JmjN domain maps to 10 to 51; it reads CPVFEPSWEEFADPFAFIHKIRPIAEQTGICKVRPPPDWQPP. The region spanning 75 to 165 is the ARID domain; sequence TRVKLNFLDQ…ILYPYNLFQS (91 aa). The segment covering 180–192 has biased composition (basic and acidic residues); it reads DTKDKEYKPHDIP. The disordered stretch occupies residues 180 to 229; that stretch reads DTKDKEYKPHDIPQRQSVQPSESCPPARRAKRLRAEATNIKTESDSPEVR. Residues 284 to 334 form a PHD-type 1 zinc finger; sequence LYVCLLCGSGNDEDRLLLCDGCDDSYHTFCLIPPLHDVPKGDWRCPQCLAQ. Residue Y400 participates in 2-oxoglutarate binding. The JmjC domain maps to 428-594; sequence EYLDSGWNLN…LGRQCIEHYR (167 aa). The Fe cation site is built by H474 and E476. 2-oxoglutarate is bound by residues S482, N484, and K492. H562 is a Fe cation binding site. The segment at 667-719 adopts a C5HC2 zinc-finger fold; sequence CYKCKTTCFMSAVYCPCKPGLLVCLYHVEDLCSCPTYQYKLGYRYTLEELYPM. The PHD-type 2 zinc finger occupies 1151–1199; that stretch reads LKVCVCQKEPAAPMIQCELCRGFFHTGCVSVPHALQGPRVWLCPQCRRS. Positions 1353–1365 are enriched in polar residues; sequence LQAEQKPSVGPSN. Disordered regions lie at residues 1353-1373 and 1400-1460; these read LQAEQKPSVGPSNEKSECCRG and ARVR…DSED. The span at 1400–1416 shows a compositional bias: basic residues; it reads ARVRKMRTPKKKKLKLS. Positions 1426-1442 are enriched in basic and acidic residues; it reads RMERERERLLEAQRSSE. The segment at 1462–1516 adopts a PHD-type 3 zinc-finger fold; sequence DAICPAVTCLQPEGEEVDWVQCDGSCNQWFHQVCVGISPEMAEKEDYICASCAGK.

The protein belongs to the JARID1 histone demethylase family. It depends on Fe(2+) as a cofactor.

It is found in the nucleus. It catalyses the reaction N(6),N(6),N(6)-trimethyl-L-lysyl(4)-[histone H3] + 3 2-oxoglutarate + 3 O2 = L-lysyl(4)-[histone H3] + 3 formaldehyde + 3 succinate + 3 CO2. In terms of biological role, histone demethylase that demethylates 'Lys-4' of histone H3, thereby playing a central role in histone code. Does not demethylate histone H3 'Lys-9' or H3 'Lys-27'. Demethylates trimethylated, dimethylated and monomethylated H3 'Lys-4'. Acts as a transcriptional corepressor. May repress the CLOCK-BMAL1 heterodimer-mediated transcriptional activation of the core clock component PER2. This is Lysine-specific demethylase 5B (KDM5B) from Gallus gallus (Chicken).